Here is a 298-residue protein sequence, read N- to C-terminus: Dioxygenase aneA (298 aa).

3 residues coordinate Fe cation: His-134, Asp-136, and His-213.

It belongs to the PhyH family. In terms of assembly, homodimer. The cofactor is Fe cation.

It catalyses the reaction aculene D + 2-oxoglutarate + O2 = aculene C + succinate + CO2 + H2O. It carries out the reaction aculene B + 2-oxoglutarate + O2 = aculene A + succinate + CO2 + H2O. Its pathway is secondary metabolite biosynthesis. Dioxygenase; part of the gene cluster that mediates the biosynthesis of aculenes, a unique type of norsesquiterpenes that contain a nordaucane skeleton linked to an L-proline moiety and are of mixed biosynthetic origin. The pathway begins with the synthesis of dauca-4,7-diene by the terpene cyclase aneC using farnesyl pyrophosphate (FPP) as substrate. The cytochrome P450 monooxygenase aneF then performs the initial oxidation at C-12 of dauca-4,7-diene to yield asperaculane D. Asperaculane D is substrate of the cytochrome P450 monooxygenase aneD for C-10 hydroxylation to yield asperaculane E. The cytochrome P450 monooxygenase aneG then converts asperaculane E into aculene D via C-2 oxidation. The monomodular nonribosomal peptide synthase aneB adenylates L-proline and the thiohydrolase aneE transfers this activated L-proline derivative to aculenes D and C to produce respectively aculenes B and A. The dioxygenase aneA converts aculene D into aculene C, and aculene B into aculene A by introducing the 5,6-alkene moiety. Asperculanes A, B, C and F, as well as 14-prolyl asperculane C, might be shunt products of the pathway. This is Dioxygenase aneA from Aspergillus aculeatus (strain ATCC 16872 / CBS 172.66 / WB 5094).